The following is a 748-amino-acid chain: Sulfhydryl oxidase 1 (748 aa).

Positions 1 to 32 are cleaved as a signal peptide; sequence MRRCGRLSGPPSLLLLLLLLSPLLFSGPGAYA. In terms of domain architecture, Thioredoxin spans 33 to 159; the sequence is ARLSVLYSSS…RMRLIDALES (127 aa). Catalysis depends on nucleophile residues cysteine 73 and cysteine 76. Intrachain disulfides connect cysteine 73-cysteine 76 and cysteine 104-cysteine 113. Residues asparagine 133 and asparagine 246 are each glycosylated (N-linked (GlcNAc...) asparagine). Cysteine 396 and cysteine 408 are joined by a disulfide. The ERV/ALR sulfhydryl oxidase domain maps to 399-506; the sequence is SEPHFRGFPC…EDPHFPKVQW (108 aa). Residues arginine 404, tryptophan 411, histidine 415, aspartate 454, histidine 458, 481–488, lysine 503, and tryptophan 506 each bind FAD; that span reads WTSHNRVN. Cysteine 452 and cysteine 455 form a disulfide bridge. Cysteine 512 and cysteine 515 are oxidised to a cystine. A disordered region spans residues 581-647; sequence GHEQAASAES…QENAPGQQHL (67 aa). Residues 628–638 show a composition bias toward basic and acidic residues; the sequence is ERMEDHQRDMQ. A helical membrane pass occupies residues 711–731; it reads ISLCVGLYSVSFMGLLAMYTY.

This sequence belongs to the quiescin-sulfhydryl oxidase (QSOX) family. As to quaternary structure, monomer. FAD serves as cofactor. N-glycosylated. O-glycosylated on Thr and Ser residues. In terms of tissue distribution, detected in skin (at protein level). Expressed in the seminal vesicles and skin.

The protein localises to the golgi apparatus membrane. Its subcellular location is the secreted. The enzyme catalyses 2 R'C(R)SH + O2 = R'C(R)S-S(R)CR' + H2O2. In terms of biological role, catalyzes the oxidation of sulfhydryl groups in peptide and protein thiols to disulfides with the reduction of oxygen to hydrogen peroxide. Plays a role in disulfide bond formation in a variety of extracellular proteins. In fibroblasts, required for normal incorporation of laminin into the extracellular matrix, and thereby for normal cell-cell adhesion and cell migration. This Mus musculus (Mouse) protein is Sulfhydryl oxidase 1 (Qsox1).